The following is a 399-amino-acid chain: Glucose-1-phosphate adenylyltransferase (399 aa).

Alpha-D-glucose 1-phosphate-binding positions include glycine 158, 174-175, and serine 192; that span reads EK.

It belongs to the bacterial/plant glucose-1-phosphate adenylyltransferase family. As to quaternary structure, homotetramer.

The catalysed reaction is alpha-D-glucose 1-phosphate + ATP + H(+) = ADP-alpha-D-glucose + diphosphate. It functions in the pathway glycan biosynthesis; glycogen biosynthesis. In terms of biological role, involved in the biosynthesis of ADP-glucose, a building block required for the elongation reactions to produce glycogen. Catalyzes the reaction between ATP and alpha-D-glucose 1-phosphate (G1P) to produce pyrophosphate and ADP-Glc. This chain is Glucose-1-phosphate adenylyltransferase, found in Streptomyces coelicolor (strain ATCC BAA-471 / A3(2) / M145).